Reading from the N-terminus, the 464-residue chain is GTPase Der (464 aa).

EngA-type G domains follow at residues 3–166 (PVIA…PEVE) and 178–351 (IRIA…DSAF). GTP contacts are provided by residues 9 to 16 (GRPNVGKS), 56 to 60 (DTGGL), 118 to 121 (NKTD), 184 to 191 (GRPNAGKS), 231 to 235 (DTAGV), and 296 to 299 (NKWD). The region spanning 352 to 436 (IKVSTNHLTK…PIRLEFKTGE (85 aa)) is the KH-like domain.

Belongs to the TRAFAC class TrmE-Era-EngA-EngB-Septin-like GTPase superfamily. EngA (Der) GTPase family. Associates with the 50S ribosomal subunit.

Its function is as follows. GTPase that plays an essential role in the late steps of ribosome biogenesis. The polypeptide is GTPase Der (Thioalkalivibrio sulfidiphilus (strain HL-EbGR7)).